The chain runs to 89 residues: Small ribosomal subunit protein uS15 (89 aa).

Residues 1 to 22 (MPLSKEQKQEVMEKYKLHEHDT) are disordered.

It belongs to the universal ribosomal protein uS15 family. Part of the 30S ribosomal subunit. Forms a bridge to the 50S subunit in the 70S ribosome, contacting the 23S rRNA.

One of the primary rRNA binding proteins, it binds directly to 16S rRNA where it helps nucleate assembly of the platform of the 30S subunit by binding and bridging several RNA helices of the 16S rRNA. Its function is as follows. Forms an intersubunit bridge (bridge B4) with the 23S rRNA of the 50S subunit in the ribosome. This Natranaerobius thermophilus (strain ATCC BAA-1301 / DSM 18059 / JW/NM-WN-LF) protein is Small ribosomal subunit protein uS15.